Consider the following 36-residue polypeptide: uncharacterized protein (36 aa).

A helical membrane pass occupies residues 13-35; that stretch reads SVILSPFPCCVLKSYLTVIYISF.

The protein localises to the host membrane. This is an uncharacterized protein from Pseudoalteromonas espejiana (Bacteriophage PM2).